The sequence spans 712 residues: Copper amine oxidase 1 (712 aa).

Substrate is bound at residue 319–330; that stretch reads AFDLGEYGAGYL. Asp-321 serves as the catalytic Proton acceptor. Cys-340 and Cys-366 are oxidised to a cystine. 404–409 contacts substrate; sequence AANYEY. The active-site Schiff-base intermediate with substrate; via topaquinone is the Tyr-407. Tyr-407 carries the 2',4',5'-topaquinone modification. Positions 458 and 460 each coordinate Cu cation. Mn(2+) is bound by residues Asp-616 and Ile-617. Cu cation is bound at residue His-627.

It belongs to the copper/topaquinone oxidase family. As to quaternary structure, homodimer. The cofactor is Cu cation. Requires Zn(2+) as cofactor. L-topaquinone is required as a cofactor. Mn(2+) serves as cofactor. Post-translationally, topaquinone (TPQ) is generated by copper-dependent autoxidation of a specific tyrosyl residue.

The protein resides in the cytoplasm. It catalyses the reaction a primary methyl amine + O2 + H2O = an aldehyde + H2O2 + NH4(+). Copper amine oxidase involved in the metabolism of xenobiotic and biogenic amines. Capable of catalyzing the oxidative deamination of primary amines such as ethylamine as alternate sources of nitrogen to support growth. The sequence is that of Copper amine oxidase 1 (cao1) from Schizosaccharomyces pombe (strain 972 / ATCC 24843) (Fission yeast).